The primary structure comprises 218 residues: Small ribosomal subunit protein uS3c (218 aa).

Residues 43–118 (IKNYVQKNMR…KLNIAITRIA (76 aa)) form the KH type-2 domain.

The protein belongs to the universal ribosomal protein uS3 family. As to quaternary structure, part of the 30S ribosomal subunit.

It is found in the plastid. Its subcellular location is the chloroplast. This chain is Small ribosomal subunit protein uS3c (rps3), found in Buxus microphylla (Littleleaf boxwood).